The sequence spans 828 residues: Periplasmic nitrate reductase (828 aa).

The segment at residues M1–A32 is a signal peptide (tat-type signal). The region spanning I37 to D93 is the 4Fe-4S Mo/W bis-MGD-type domain. Residues C44, C47, C51, and C79 each contribute to the [4Fe-4S] cluster site. Mo-bis(molybdopterin guanine dinucleotide) is bound by residues K81, Q148, N173, C177, W210 to M217, S241 to H245, M371, Q375, N481, S507 to D508, K530, D557, and T717 to T726. F793 is a substrate binding site. N801 and K818 together coordinate Mo-bis(molybdopterin guanine dinucleotide).

The protein belongs to the prokaryotic molybdopterin-containing oxidoreductase family. NasA/NapA/NarB subfamily. As to quaternary structure, component of the periplasmic nitrate reductase NapAB complex composed of NapA and NapB. The cofactor is [4Fe-4S] cluster. Mo-bis(molybdopterin guanine dinucleotide) serves as cofactor. Predicted to be exported by the Tat system. The position of the signal peptide cleavage has not been experimentally proven.

The protein localises to the periplasm. It carries out the reaction 2 Fe(II)-[cytochrome] + nitrate + 2 H(+) = 2 Fe(III)-[cytochrome] + nitrite + H2O. Catalytic subunit of the periplasmic nitrate reductase complex NapAB. Receives electrons from NapB and catalyzes the reduction of nitrate to nitrite. In Aggregatibacter actinomycetemcomitans (Actinobacillus actinomycetemcomitans), this protein is Periplasmic nitrate reductase.